The sequence spans 205 residues: Bacterial microcompartment protein trimer-1 (205 aa).

The disordered stretch occupies residues 1-20 (MDHAPERFDATPPAGEPDRP). BMC domains are found at residues 21–106 (ALGV…RFLD) and 120–204 (SVII…GRLF).

This sequence belongs to the bacterial microcompartments protein family. In terms of assembly, homotrimerizes to form a pseudohexamer. Unlike its paralogs BMC-T2 and BMC-T3, the pseudohexamers do not stack. The concave side faces outward, with the N- and C-terminii exposed to the cytoplasm.

It is found in the bacterial microcompartment. Its function is as follows. A minor component of the bacterial microcompartment (BMC) shell. Expression of 5 proteins in E.coli (BMC-H (Hoch_5815), BMC-P (Hoch_5814), and 3 BMC-T (Hoch_5812, Hoch_5816, Hoch_3341)) forms 40 nm artificial BMCs with a molecular mass of 6.5 MDa. This protein does not form stacked pseudohexamers in the BMC. There are 20 BMC-T pseudohexamers per BMC, composed of mixed BMC-T1, BMC-T2 and BMC-T3. The shell facets are 20-30 Angstroms thick, with 1 of BMC-T trimers protruding to the exterior. This Haliangium ochraceum (strain DSM 14365 / JCM 11303 / SMP-2) protein is Bacterial microcompartment protein trimer-1.